A 431-amino-acid polypeptide reads, in one-letter code: MNVVRRLTSIASGRNFVSSDNVGETETPRSKPNQNREETESTETTSYEKDSVSSSENSDHLPKEIREDMDCGIIKGNGTESGRIITTKKKGLNDQKDKTISYRAEHVIGTGSFGVVFQAKCLETEEKVAIKKVLQDKRYKNRELQIMRMLDHPNVVELKHSFFSTTEKDELYLNLVLEYVPETIYRASRSYTKMNQHMPLIYIQLYTYQICRAMNYLHQVVGVCHRDIKPQNLLVNNVTHEVKICDFGSAKMLIPGEPNISYICSRYYRAPELIFGATEYTSAIDMWSVGCVMAELFLGHPLFPGETSVDQLVEIIKILGTPAREEIKNMNPRYNDFKFPQIKAQPWHKIFRRQVSPEAMDLASRLLQYSPNLRCTALEACAHPFFDDLRDPRASLPNGRALPPLFDFTAQELAGASVELRHRLIPEHARK.

Residues Ser12–Glu24 are compositionally biased toward polar residues. A disordered region spans residues Ser12–Ile65. Composition is skewed to basic and acidic residues over residues Glu26 to Thr39 and Ser46 to Ile65. In terms of domain architecture, Protein kinase spans Tyr102–Phe386. Residues Ile108 to Val116 and Lys131 contribute to the ATP site. Asp227 acts as the Proton acceptor in catalysis. Tyr262 carries the phosphotyrosine modification.

This sequence belongs to the protein kinase superfamily. CMGC Ser/Thr protein kinase family. GSK-3 subfamily. In terms of processing, autophosphorylated mainly on threonine and serine residues.

The catalysed reaction is L-seryl-[protein] + ATP = O-phospho-L-seryl-[protein] + ADP + H(+). It catalyses the reaction L-threonyl-[protein] + ATP = O-phospho-L-threonyl-[protein] + ADP + H(+). Its function is as follows. May mediate extracellular signals to regulate transcription in differentiating cells. This Arabidopsis thaliana (Mouse-ear cress) protein is Shaggy-related protein kinase beta.